Reading from the N-terminus, the 355-residue chain is Sulfate/thiosulfate import ATP-binding protein CysA (355 aa).

Residues 3 to 233 (IIINNVSKQF…PASPFVMGFI (231 aa)) enclose the ABC transporter domain. 35–42 (GPSGSGKS) contacts ATP.

Belongs to the ABC transporter superfamily. Sulfate/tungstate importer (TC 3.A.1.6) family. In terms of assembly, the complex is composed of two ATP-binding proteins (CysA), two transmembrane proteins (CysT and CysW) and a solute-binding protein (CysP).

It localises to the cell inner membrane. The enzyme catalyses sulfate(out) + ATP + H2O = sulfate(in) + ADP + phosphate + H(+). The catalysed reaction is thiosulfate(out) + ATP + H2O = thiosulfate(in) + ADP + phosphate + H(+). Part of the ABC transporter complex CysAWTP involved in sulfate/thiosulfate import. Responsible for energy coupling to the transport system. This Synechocystis sp. (strain ATCC 27184 / PCC 6803 / Kazusa) protein is Sulfate/thiosulfate import ATP-binding protein CysA.